The chain runs to 183 residues: MVGGDRRFKVSKLMAYILRHSPWEFGLEPDEEGFVELADLIRAIKTVYPWVTEEFIKEIVEKDSKGRYEIRGSKIRARYGHSYPVVLKHEEDTESKVLYHGTIRENLKGILKEGIKPMKRQYVHLSLSYEDAYYTGRRHGKDVVVLLIDAECLRRKGYKILKAGKRVRIVKHVPVECISEILD.

Belongs to the KptA/TPT1 family.

Its function is as follows. Removes the 2'-phosphate from RNA via an intermediate in which the phosphate is ADP-ribosylated by NAD followed by a presumed transesterification to release the RNA and generate ADP-ribose 1''-2''-cyclic phosphate (APPR&gt;P). May function as an ADP-ribosylase. This Pyrococcus furiosus (strain ATCC 43587 / DSM 3638 / JCM 8422 / Vc1) protein is Probable RNA 2'-phosphotransferase.